Reading from the N-terminus, the 64-residue chain is Basic secretory protease (64 aa).

A divalent metal cation is required as a cofactor. In terms of processing, glycosylated.

Its activity is regulated as follows. Inhibited by EDTA. Metalloprotease, digests gelatin and azocasein (in vitro). This Boswellia serrata (Indian frankincense) protein is Basic secretory protease.